The following is a 1042-amino-acid chain: V(D)J recombination-activating protein 1 (1042 aa).

The span at 40-52 (KTTEENQKEKNSS) shows a compositional bias: basic and acidic residues. The segment at 40 to 80 (KTTEENQKEKNSSEGKPSLEQSPAVLDKASGQKPEVAPPAF) is disordered. Lys233 participates in a covalent cross-link: Glycyl lysine isopeptide (Lys-Gly) (interchain with G-Cter in ubiquitin). Zn(2+)-binding residues include Cys268, His272, Cys292, Cys295, His297, Cys307, His309, Cys312, Cys315, Cys327, Cys330, Cys357, Cys362, His374, and His378. Residues 292–331 (CQICEHILADPVETSCKHVFCRICILRCLKVMGSYCPSCQ) form an RING-type zinc finger. The segment at 353–382 (LIVKCSAPECNEEVSLEKYNHHVSSHKESR) adopts an RAG1-type zinc-finger fold. The NBD DNA-binding region spans 391-458 (GGRPRQHLLS…QADELEAIMQ (68 aa)). Positions 602, 710, and 964 each coordinate a divalent metal cation.

This sequence belongs to the RAG1 family. Homodimer. Component of the RAG complex composed of core components RAG1 and RAG2, and associated component HMGB1 or HMGB2. Interacts with DCAF1, leading to recruitment of the CUL4A-RBX1-DDB1-DCAF1/VPRBP complex to ubiquitinate proteins and limit error-prone repair during V(D)J recombination. The cofactor is Mg(2+). Mn(2+) is required as a cofactor. Post-translationally, autoubiquitinated in the presence of CDC34/UBCH3.

The protein localises to the nucleus. The catalysed reaction is S-ubiquitinyl-[E2 ubiquitin-conjugating enzyme]-L-cysteine + [acceptor protein]-L-lysine = [E2 ubiquitin-conjugating enzyme]-L-cysteine + N(6)-ubiquitinyl-[acceptor protein]-L-lysine.. Catalytic component of the RAG complex, a multiprotein complex that mediates the DNA cleavage phase during V(D)J recombination. V(D)J recombination assembles a diverse repertoire of immunoglobulin and T-cell receptor genes in developing B and T-lymphocytes through rearrangement of different V (variable), in some cases D (diversity), and J (joining) gene segments. In the RAG complex, RAG1 mediates the DNA-binding to the conserved recombination signal sequences (RSS) and catalyzes the DNA cleavage activities by introducing a double-strand break between the RSS and the adjacent coding segment. RAG2 is not a catalytic component but is required for all known catalytic activities. DNA cleavage occurs in 2 steps: a first nick is introduced in the top strand immediately upstream of the heptamer, generating a 3'-hydroxyl group that can attack the phosphodiester bond on the opposite strand in a direct transesterification reaction, thereby creating 4 DNA ends: 2 hairpin coding ends and 2 blunt, 5'-phosphorylated ends. The chromatin structure plays an essential role in the V(D)J recombination reactions and the presence of histone H3 trimethylated at 'Lys-4' (H3K4me3) stimulates both the nicking and haipinning steps. The RAG complex also plays a role in pre-B cell allelic exclusion, a process leading to expression of a single immunoglobulin heavy chain allele to enforce clonality and monospecific recognition by the B-cell antigen receptor (BCR) expressed on individual B-lymphocytes. The introduction of DNA breaks by the RAG complex on one immunoglobulin allele induces ATM-dependent repositioning of the other allele to pericentromeric heterochromatin, preventing accessibility to the RAG complex and recombination of the second allele. In addition to its endonuclease activity, RAG1 also acts as an E3 ubiquitin-protein ligase that mediates monoubiquitination of histone H3. Histone H3 monoubiquitination is required for the joining step of V(D)J recombination. Mediates polyubiquitination of KPNA1. This is V(D)J recombination-activating protein 1 (RAG1) from Oryctolagus cuniculus (Rabbit).